Reading from the N-terminus, the 596-residue chain is Ulvan-active sulfatase (596 aa).

The signal sequence occupies residues 1 to 27 (MLFLRFKFFNNRLLFVSVLCFVICVSC). Positions 58, 59, 97, 306, and 307 each coordinate Ca(2+). The active-site Nucleophile is the C97. C97 is modified (3-oxoalanine (Cys)).

This sequence belongs to the sulfatase family. Ca(2+) serves as cofactor. Post-translationally, the conversion to 3-oxoalanine (also known as C-formylglycine, FGly), of a serine or cysteine residue in prokaryotes and of a cysteine residue in eukaryotes, is critical for catalytic activity.

Its subcellular location is the periplasm. Its function is as follows. Sulfatase involved in ulvan degradation. Ulvan is the main polysaccharide component of the Ulvales (green seaweed) cell wall. It is composed of disaccharide building blocks comprising 3-sulfated rhamnose (Rha3S) linked to D-glucuronic acid (GlcA), L-iduronic acid (IduA), or D-xylose (Xyl). The sulfatase desulfates Xyl2S-Rha3S, product of the degradation of ulvan by endo-acting alpha-1,4-L-rhamnosidase, to Xyl-Rha3S. This chain is Ulvan-active sulfatase, found in Formosa agariphila (strain DSM 15362 / KCTC 12365 / LMG 23005 / KMM 3901 / M-2Alg 35-1).